The primary structure comprises 182 residues: uncharacterized protein (182 aa).

The 170-residue stretch at 1–170 (MIVKIIKGDI…IFVNIFEREL (170 aa)) folds into the Macro domain.

This is an uncharacterized protein from Sulfurisphaera tokodaii (strain DSM 16993 / JCM 10545 / NBRC 100140 / 7) (Sulfolobus tokodaii).